Reading from the N-terminus, the 705-residue chain is Solute carrier family 12 member 8 (705 aa).

The next 11 helical transmembrane spans lie at 38–58 (FGTWDGVFTSCMINIFGVVLF), 69–89 (GVLLGLLLVSFVVLVALITVL), 92–112 (IGVAEHGGISSGGVYSMISSV), 121–141 (VGLLYVFGQCVAGAMYITGFA), 159–179 (ISVAVLLALLGINLAGVKWII), 181–201 (LQLLLLLLLAVSTLDFVVGSF), 232–252 (FFTVFGVFFPAATGVMAGFNM), 268–288 (LAAVGVSWFLYIIFAFLLGAV), 306–326 (LVGFLFLLGLYISSLASCMGG), 368–388 (LVTMAFVLVGQVNVLAPVVTI), and 390–410 (FMLTYIMVDYSYFALSMAHCG). The interval 472–512 (ESRQLGSREGNNPKNQKRKGKKGAKQTLQDSFLLDPGSPLS) is disordered. Over residues 486–495 (NQKRKGKKGA) the composition is skewed to basic residues. Transmembrane regions (helical) follow at residues 587-607 (WVSLLGALASLLIMFVIQWLY) and 612-632 (MGVAALVYFYIGQASPGLYLG).

It belongs to the SLC12A transporter family.

The protein resides in the membrane. In terms of biological role, cation/chloride cotransporter that may play a role in the control of keratinocyte proliferation. This chain is Solute carrier family 12 member 8 (Slc12a8), found in Mus musculus (Mouse).